A 641-amino-acid polypeptide reads, in one-letter code: Sodium-dependent nutrient amino acid transporter 1 (641 aa).

A disordered region spans residues 1 to 36 (MELKGVQPSNGSANGNGTTNAASTEKTDAEKHTPER). The Cytoplasmic portion of the chain corresponds to 1 to 38 (MELKGVQPSNGSANGNGTTNAASTEKTDAEKHTPERTN). Residues 9–24 (SNGSANGNGTTNAAST) are compositionally biased toward low complexity. Positions 25–35 (EKTDAEKHTPE) are enriched in basic and acidic residues. 3 consecutive transmembrane segments (helical) span residues 39 to 59 (WGNGLEFLMSCISVSVGLGNV), 72 to 92 (GAFLIPYIIVLFLIGKPMYYL), and 109 to 129 (SVVPGFVGVGYGQAFGTICII). N-linked (GlcNAc...) asparagine glycosylation is found at N183 and N188. Helical transmembrane passes span 229–249 (PDWKLTLALLAAWVVIFLVIM), 258–278 (AAYFLALFPYVVLFVLLIRAV), 307–327 (AVVQCFFSLAVGSGPIIMFAS), 341–361 (IVTTLDTLTSLLGGITIFAIL), 401–421 (LFSVLFFFMLFVLGIGSIVAL), 441–461 (VALITSACGFLMGLVYVTPGG), 474–494 (TYVVFILAIFELAGIVWVYGL), 516–536 (CWSFFTPVMMIIIFIYSMVTI), and 552–572 (IAGWLLFAIGAAQFPLWGLWY).

The protein belongs to the sodium:neurotransmitter symporter (SNF) (TC 2.A.22) family.

It localises to the membrane. Functionally, unusual broad substrate spectrum amino acid:sodium cotransporter that promotes absorption of the D isomers of essential amino acids. Neutral amino acids are the preferred substrates, especially methionine and phenylalanine. This Drosophila erecta (Fruit fly) protein is Sodium-dependent nutrient amino acid transporter 1.